Consider the following 556-residue polypeptide: 2-isopropylmalate synthase (556 aa).

In terms of domain architecture, Pyruvate carboxyltransferase spans 33–307 (PIWLSSDLRD…DPQLDFSDID (275 aa)). Mg(2+)-binding residues include Asp-42, His-246, His-248, and Asn-282. The interval 439–556 (ATAPYTLKGH…ALHQAQEAAA (118 aa)) is regulatory domain.

It belongs to the alpha-IPM synthase/homocitrate synthase family. LeuA type 2 subfamily. Homodimer. The cofactor is Mg(2+).

The protein localises to the cytoplasm. It catalyses the reaction 3-methyl-2-oxobutanoate + acetyl-CoA + H2O = (2S)-2-isopropylmalate + CoA + H(+). Its pathway is amino-acid biosynthesis; L-leucine biosynthesis; L-leucine from 3-methyl-2-oxobutanoate: step 1/4. Its function is as follows. Catalyzes the condensation of the acetyl group of acetyl-CoA with 3-methyl-2-oxobutanoate (2-ketoisovalerate) to form 3-carboxy-3-hydroxy-4-methylpentanoate (2-isopropylmalate). The protein is 2-isopropylmalate synthase of Stutzerimonas stutzeri (strain A1501) (Pseudomonas stutzeri).